The primary structure comprises 295 residues: Fructose-bisphosphate aldolase class 1 (295 aa).

Catalysis depends on Glu-176, which acts as the Proton acceptor. Catalysis depends on Lys-213, which acts as the Schiff-base intermediate with dihydroxyacetone-P.

This sequence belongs to the class I fructose-bisphosphate aldolase family.

The catalysed reaction is beta-D-fructose 1,6-bisphosphate = D-glyceraldehyde 3-phosphate + dihydroxyacetone phosphate. It functions in the pathway carbohydrate degradation; glycolysis; D-glyceraldehyde 3-phosphate and glycerone phosphate from D-glucose: step 4/4. This chain is Fructose-bisphosphate aldolase class 1, found in Fusobacterium nucleatum subsp. nucleatum (strain ATCC 25586 / DSM 15643 / BCRC 10681 / CIP 101130 / JCM 8532 / KCTC 2640 / LMG 13131 / VPI 4355).